Consider the following 162-residue polypeptide: NADH-quinone oxidoreductase subunit I 2 (162 aa).

4Fe-4S ferredoxin-type domains are found at residues 52–82 and 93–122; these read LRRYPNGEERCIACKLCEAVCPAQAITIEAG and ERYDIDMVKCIYCGLCQEACPVDAIVEGPN. Cysteine 62, cysteine 65, cysteine 68, cysteine 72, cysteine 102, cysteine 105, cysteine 108, and cysteine 112 together coordinate [4Fe-4S] cluster.

This sequence belongs to the complex I 23 kDa subunit family. In terms of assembly, NDH-1 is composed of 14 different subunits. Subunits NuoA, H, J, K, L, M, N constitute the membrane sector of the complex. [4Fe-4S] cluster is required as a cofactor.

It localises to the cell inner membrane. The catalysed reaction is a quinone + NADH + 5 H(+)(in) = a quinol + NAD(+) + 4 H(+)(out). Functionally, NDH-1 shuttles electrons from NADH, via FMN and iron-sulfur (Fe-S) centers, to quinones in the respiratory chain. The immediate electron acceptor for the enzyme in this species is believed to be ubiquinone. Couples the redox reaction to proton translocation (for every two electrons transferred, four hydrogen ions are translocated across the cytoplasmic membrane), and thus conserves the redox energy in a proton gradient. The protein is NADH-quinone oxidoreductase subunit I 2 of Rhodopseudomonas palustris (strain BisA53).